The primary structure comprises 101 residues: uncharacterized protein (101 aa).

A compositionally biased stretch (basic residues) spans 1–12 (MAAFQHRAKRSK). Disordered regions lie at residues 1–30 (MAAFQHRAKRSKNGASAKQGKISKADKKRA) and 65–87 (AQDQRSDAQAQQQRAQERSNVDK). Over residues 65 to 78 (AQDQRSDAQAQQQR) the composition is skewed to low complexity.

This is an uncharacterized protein from Eremothecium gossypii (strain ATCC 10895 / CBS 109.51 / FGSC 9923 / NRRL Y-1056) (Yeast).